The following is a 206-amino-acid chain: MAKFDVYDLSKKKVGELDLADAVFAGEVNEHLFYEVVKAKLASDRSGTHAVKNRSLVSGGGKKPWKQKHTGRARQGSTRASQWVGGGKAMGPKPRDYSYDVPKKVRKAALRSALALRSKDQKLVIVQEWKPGAPKTAAAAKVLAALGAKKALVVDDAANLALAKSVRNLDGSDFLAVEGLNVYDILRHDALVLTADTAKKLEASLS.

The segment at 48 to 97 (THAVKNRSLVSGGGKKPWKQKHTGRARQGSTRASQWVGGGKAMGPKPRDY) is disordered. Positions 63 to 72 (KPWKQKHTGR) are enriched in basic residues.

It belongs to the universal ribosomal protein uL4 family. In terms of assembly, part of the 50S ribosomal subunit.

Functionally, one of the primary rRNA binding proteins, this protein initially binds near the 5'-end of the 23S rRNA. It is important during the early stages of 50S assembly. It makes multiple contacts with different domains of the 23S rRNA in the assembled 50S subunit and ribosome. Forms part of the polypeptide exit tunnel. The chain is Large ribosomal subunit protein uL4 from Anaeromyxobacter sp. (strain K).